A 2035-amino-acid chain; its full sequence is Ral GTPase-activating protein subunit alpha-1 (2035 aa).

2 disordered regions span residues 343 to 384 (LVSR…SSLC) and 477 to 496 (DGEKREEENGTSTSEHVRNS). A compositionally biased stretch (basic and acidic residues) spans 345 to 365 (SREESKNDTVDKVDKSAEPEQ). Polar residues-rich tracts occupy residues 366-384 (SHSNTSTLTEREPSSSSLC) and 486-496 (GTSTSEHVRNS). Ser710 and Ser720 each carry phosphoserine. A disordered region spans residues 714 to 752 (SFSRGWSRDQPGQAPMRQRSATTTGSPGTEKARSIVRQK). Thr753 carries the phosphothreonine modification. Ser772 carries the post-translational modification Phosphoserine. Thr777 bears the Phosphothreonine mark. Ser796 is subject to Phosphoserine. The span at 807–817 (ERAKVNKEDTS) shows a compositional bias: basic and acidic residues. Disordered stretches follow at residues 807-834 (ERAKVNKEDTSPKLPPLNSETGGNSANV) and 848-911 (SGNA…SHSD). 2 stretches are compositionally biased toward polar residues: residues 824–833 (NSETGGNSAN) and 849–862 (GNASTMTRRGSSPG). Phosphoserine occurs at positions 859, 860, and 863. A compositionally biased stretch (low complexity) spans 894 to 911 (SPASAGSSDLMSSDSHSD). 4 positions are modified to phosphoserine: Ser985, Ser989, Ser993, and Ser999. Over residues 986–1008 (ESASPVHSALGSRSQTPSPSTLS) the composition is skewed to polar residues. The interval 986 to 1011 (ESASPVHSALGSRSQTPSPSTLSRAH) is disordered. A Phosphothreonine modification is found at Thr1001. A phosphoserine mark is found at Ser1003 and Ser1477. The tract at residues 1326 to 2035 (FTNKTVAHVA…YHHFPADADH (710 aa)) is minimal domain that binds to TCF3/E12. Residues 1713–1748 (SEKQENDVINAILKQYTEEKEFVEKHFNDLNMKASE) adopt a coiled-coil conformation. The 209-residue stretch at 1795-2003 (LRNLDSRQCR…EERARYLQTI (209 aa)) folds into the Rap-GAP domain.

Component of the heterodimeric RalGAP1 complex with RALGAPB. Heterodimerization is required for activity. Interacts with the HLH region of TCF3/isoform E12. Expressed during embryogenesis. Expressed in the adult brain, particularly in neurons of the cortex and hippocampus.

Its subcellular location is the cytoplasm. The protein localises to the nucleus. Catalytic subunit of the heterodimeric RalGAP1 complex which acts as a GTPase activator for the Ras-like small GTPases RALA and RALB. May interact with the HLH region of TCF3/isoform E12. The protein is Ral GTPase-activating protein subunit alpha-1 (Ralgapa1) of Mus musculus (Mouse).